Reading from the N-terminus, the 130-residue chain is Small ribosomal subunit protein uS8 (130 aa).

Belongs to the universal ribosomal protein uS8 family. As to quaternary structure, part of the 30S ribosomal subunit.

Functionally, one of the primary rRNA binding proteins, it binds directly to 16S rRNA central domain where it helps coordinate assembly of the platform of the 30S subunit. This is Small ribosomal subunit protein uS8 from Pyrococcus abyssi (strain GE5 / Orsay).